The following is a 109-amino-acid chain: Large ribosomal subunit protein uL24 (109 aa).

The protein belongs to the universal ribosomal protein uL24 family. In terms of assembly, part of the 50S ribosomal subunit.

In terms of biological role, one of two assembly initiator proteins, it binds directly to the 5'-end of the 23S rRNA, where it nucleates assembly of the 50S subunit. One of the proteins that surrounds the polypeptide exit tunnel on the outside of the subunit. The polypeptide is Large ribosomal subunit protein uL24 (Legionella pneumophila (strain Paris)).